Reading from the N-terminus, the 505-residue chain is Light-independent protochlorophyllide reductase subunit B (505 aa).

Asp36 provides a ligand contact to [4Fe-4S] cluster. The active-site Proton donor is the Asp291. 426-427 lines the substrate pocket; it reads GM.

Belongs to the ChlB/BchB/BchZ family. As to quaternary structure, protochlorophyllide reductase is composed of three subunits; ChlL, ChlN and ChlB. Forms a heterotetramer of two ChlB and two ChlN subunits. Requires [4Fe-4S] cluster as cofactor.

It carries out the reaction chlorophyllide a + oxidized 2[4Fe-4S]-[ferredoxin] + 2 ADP + 2 phosphate = protochlorophyllide a + reduced 2[4Fe-4S]-[ferredoxin] + 2 ATP + 2 H2O. The protein operates within porphyrin-containing compound metabolism; chlorophyll biosynthesis (light-independent). In terms of biological role, component of the dark-operative protochlorophyllide reductase (DPOR) that uses Mg-ATP and reduced ferredoxin to reduce ring D of protochlorophyllide (Pchlide) to form chlorophyllide a (Chlide). This reaction is light-independent. The NB-protein (ChlN-ChlB) is the catalytic component of the complex. The chain is Light-independent protochlorophyllide reductase subunit B from Gloeobacter violaceus (strain ATCC 29082 / PCC 7421).